Reading from the N-terminus, the 277-residue chain is Ubiquinone biosynthesis protein COQ4, mitochondrial (277 aa).

The transit peptide at 1–14 directs the protein to the mitochondrion; sequence MLTKRALRTTDPYR. Zn(2+) contacts are provided by His-157, Asp-158, His-161, and Glu-173.

The protein belongs to the COQ4 family. Component of a multi-subunit COQ enzyme complex, composed of at least COQ3, COQ4, COQ5, COQ6, COQ7 and COQ9. The cofactor is Zn(2+).

It localises to the mitochondrion inner membrane. It carries out the reaction a 4-hydroxy-3-methoxy-5-(all-trans-polyprenyl)benzoate + H(+) = a 2-methoxy-6-(all-trans-polyprenyl)phenol + CO2. It participates in cofactor biosynthesis; ubiquinone biosynthesis. In terms of biological role, lyase that catalyzes the C1-decarboxylation of 4-hydroxy-3-methoxy-5-(all-trans-polyprenyl)benzoic acid into 2-methoxy-6-(all-trans-polyprenyl)phenol during ubiquinone biosynthesis. This Ajellomyces capsulatus (strain G186AR / H82 / ATCC MYA-2454 / RMSCC 2432) (Darling's disease fungus) protein is Ubiquinone biosynthesis protein COQ4, mitochondrial.